Consider the following 263-residue polypeptide: Indolethylamine N-methyltransferase (263 aa).

Lys-13 is subject to N6-succinyllysine. S-adenosyl-L-methionine contacts are provided by residues Tyr-20, Tyr-25, 63-64, Tyr-69, Asp-85, and Asn-90; that span reads GS. Lys-96 is subject to N6-succinyllysine. Residues 142–143 and Leu-163 contribute to the S-adenosyl-L-methionine site; that span reads DV.

Belongs to the class I-like SAM-binding methyltransferase superfamily. NNMT/PNMT/TEMT family. Monomer.

The protein localises to the cytoplasm. The enzyme catalyses a tertiary amine + S-adenosyl-L-methionine = a methylated tertiary amine + S-adenosyl-L-homocysteine + H(+). It catalyses the reaction a secondary amine + S-adenosyl-L-methionine = a methylated secondary amine + S-adenosyl-L-homocysteine + H(+). The catalysed reaction is a primary amine + S-adenosyl-L-methionine = a methylated primary amine + S-adenosyl-L-homocysteine + H(+). It carries out the reaction dimethyl sulfide + S-adenosyl-L-methionine = trimethylsulfonium + S-adenosyl-L-homocysteine. In terms of biological role, catalyzes the N-methylation of tryptamine and structurally related compounds. Functions as a thioether S-methyltransferase and is active with a variety of thioethers and the corresponding selenium and tellurium compounds, including 3-methylthiopropionaldehyde, dimethyl selenide, dimethyl telluride, 2-methylthioethylamine, 2-methylthioethanol, methyl-n-propyl sulfide and diethyl sulfide. Plays an important role in the detoxification of selenium compounds. The protein is Indolethylamine N-methyltransferase (INMT) of Pongo abelii (Sumatran orangutan).